The following is a 60-amino-acid chain: Myrmicitoxin(1)-Pr4a (60 aa).

The first 23 residues, 1 to 23 (MKAIIFLFAVLTVVAIIIPIISG), serve as a signal peptide directing secretion. Residues 24 to 33 (EPNAGPHAAS) constitute a propeptide that is removed on maturation. Gln59 carries the post-translational modification Glutamine amide.

This sequence belongs to the formicidae venom clade 2 family. Expressed by the venom gland.

It localises to the secreted. Functionally, toxin that causes a rapid and irreversible paralysis when intrathoracically injected into insects (blowflies). Does not cause spontaneous nocifensive behaviors by intraplantar injection in mice. The sequence is that of Myrmicitoxin(1)-Pr4a from Pogonomyrmex rugosus (Desert harvester ant).